The chain runs to 321 residues: Glucokinase (321 aa).

8-13 (GDVGGT) lines the ATP pocket.

The protein belongs to the bacterial glucokinase family.

The protein localises to the cytoplasm. The enzyme catalyses D-glucose + ATP = D-glucose 6-phosphate + ADP + H(+). This is Glucokinase from Pectobacterium atrosepticum (strain SCRI 1043 / ATCC BAA-672) (Erwinia carotovora subsp. atroseptica).